Consider the following 327-residue polypeptide: Plastid lipid-associated protein 1, chloroplastic (327 aa).

Residues 1-84 constitute a chloroplast transit peptide; sequence MATTVPLFSQ…WGPEIGLNSS (84 aa). A disordered region spans residues 56 to 78; the sequence is VNDEWGPDSKGRGGDVDDEWGPE. The stretch at 85–107 forms a coiled coil; sequence VAEKVAEEAIESAEETERLKRVL.

It belongs to the PAP/fibrillin family. In terms of tissue distribution, expressed in anthers, sepals seeds, fruit coats, and leaves. Very low in petals and pistils and not detected in roots.

Its subcellular location is the plastid. It is found in the chloroplast. Functionally, may modulate the action of carotenoids. This chain is Plastid lipid-associated protein 1, chloroplastic (PAP1), found in Brassica campestris (Field mustard).